The sequence spans 289 residues: Polyamine aminopropyltransferase (289 aa).

Residues 5 to 245 enclose the PABS domain; the sequence is PGPIVLVEPL…YAVNYILGSL (241 aa). Residue Gln-36 coordinates S-methyl-5'-thioadenosine. His-67 and Glu-91 together coordinate spermidine. Residues Asp-111 and 143 to 144 contribute to the S-methyl-5'-thioadenosine site; that span reads DG. Asp-164 functions as the Proton acceptor in the catalytic mechanism.

It belongs to the spermidine/spermine synthase family. As to quaternary structure, homodimer or homotetramer.

Its subcellular location is the cytoplasm. It catalyses the reaction S-adenosyl 3-(methylsulfanyl)propylamine + putrescine = S-methyl-5'-thioadenosine + spermidine + H(+). It functions in the pathway amine and polyamine biosynthesis; spermidine biosynthesis; spermidine from putrescine: step 1/1. Catalyzes the irreversible transfer of a propylamine group from the amino donor S-adenosylmethioninamine (decarboxy-AdoMet) to putrescine (1,4-diaminobutane) to yield spermidine. The sequence is that of Polyamine aminopropyltransferase from Pyrobaculum arsenaticum (strain DSM 13514 / JCM 11321 / PZ6).